A 1004-amino-acid chain; its full sequence is 2-oxoglutarate dehydrogenase E1 component (1004 aa).

Belongs to the alpha-ketoglutarate dehydrogenase family. As to quaternary structure, homodimer. Part of the 2-oxoglutarate dehydrogenase (OGDH) complex composed of E1 (2-oxoglutarate dehydrogenase), E2 (dihydrolipoamide succinyltransferase) and E3 (dihydrolipoamide dehydrogenase); the complex contains multiple copies of the three enzymatic components (E1, E2 and E3). Requires thiamine diphosphate as cofactor.

It catalyses the reaction N(6)-[(R)-lipoyl]-L-lysyl-[protein] + 2-oxoglutarate + H(+) = N(6)-[(R)-S(8)-succinyldihydrolipoyl]-L-lysyl-[protein] + CO2. Functionally, E1 component of the 2-oxoglutarate dehydrogenase (OGDH) complex which catalyzes the decarboxylation of 2-oxoglutarate, the first step in the conversion of 2-oxoglutarate to succinyl-CoA and CO(2). This Brucella melitensis biotype 2 (strain ATCC 23457) protein is 2-oxoglutarate dehydrogenase E1 component.